We begin with the raw amino-acid sequence, 149 residues long: UPF0260 protein Pfl01_1392 (149 aa).

This sequence belongs to the UPF0260 family.

This is UPF0260 protein Pfl01_1392 from Pseudomonas fluorescens (strain Pf0-1).